Consider the following 85-residue polypeptide: Putative membrane protein insertion efficiency factor (85 aa).

Belongs to the UPF0161 family.

The protein resides in the cell membrane. Could be involved in insertion of integral membrane proteins into the membrane. The polypeptide is Putative membrane protein insertion efficiency factor (Buchnera aphidicola subsp. Schizaphis graminum (strain Sg)).